We begin with the raw amino-acid sequence, 193 residues long: uncharacterized protein (193 aa).

The segment at 1 to 84 (MTSKCSKWHE…RRSNQRIQLY (84 aa)) is disordered. Basic residues predominate over residues 43 to 78 (SSPRRSSPRRSPRRSSPRRSSPRRSSPRRSSPRRSN).

This sequence belongs to the IIV-6 378R family.

This is an uncharacterized protein from Invertebrate iridescent virus 6 (IIV-6).